The following is a 155-amino-acid chain: Small ribosomal subunit protein uS7 (155 aa).

The protein belongs to the universal ribosomal protein uS7 family. Part of the 30S ribosomal subunit. Contacts proteins S9 and S11.

Its function is as follows. One of the primary rRNA binding proteins, it binds directly to 16S rRNA where it nucleates assembly of the head domain of the 30S subunit. Is located at the subunit interface close to the decoding center, probably blocks exit of the E-site tRNA. This chain is Small ribosomal subunit protein uS7, found in Thioalkalivibrio sulfidiphilus (strain HL-EbGR7).